The following is a 25-amino-acid chain: Defensin D3 (25 aa).

It belongs to the DEFL family. Group IV subfamily. As to expression, distributed in the epidermal cell layer of leaves and in the subepidermal layer region of stems. Not in roots.

It localises to the secreted. The protein localises to the cell wall. Antimicrobial peptide. Active against Fusarium spp., Gram-positive and Gram-negative bacterial pathogens. This chain is Defensin D3, found in Spinacia oleracea (Spinach).